Here is a 912-residue protein sequence, read N- to C-terminus: Protein translocase subunit SecA (912 aa).

Residues Q87, 105–109 (GEGKT), and D508 each bind ATP. The interval 864–912 (AEEEVEQMQGGNAPVPVSQVTRDEPKVGRNDPCPCGSGKKYKHCHGQLS) is disordered. 4 residues coordinate Zn(2+): C896, C898, C907, and H908. Residues 902–912 (KKYKHCHGQLS) show a composition bias toward basic residues.

This sequence belongs to the SecA family. Monomer and homodimer. Part of the essential Sec protein translocation apparatus which comprises SecA, SecYEG and auxiliary proteins SecDF-YajC and YidC. Requires Zn(2+) as cofactor.

Its subcellular location is the cell inner membrane. The protein localises to the cytoplasm. The enzyme catalyses ATP + H2O + cellular proteinSide 1 = ADP + phosphate + cellular proteinSide 2.. Functionally, part of the Sec protein translocase complex. Interacts with the SecYEG preprotein conducting channel. Has a central role in coupling the hydrolysis of ATP to the transfer of proteins into and across the cell membrane, serving both as a receptor for the preprotein-SecB complex and as an ATP-driven molecular motor driving the stepwise translocation of polypeptide chains across the membrane. The polypeptide is Protein translocase subunit SecA (Xanthomonas euvesicatoria pv. vesicatoria (strain 85-10) (Xanthomonas campestris pv. vesicatoria)).